Here is a 321-residue protein sequence, read N- to C-terminus: Protein-L-histidine N-pros-methyltransferase (321 aa).

The signal sequence occupies residues 1-24 (MRLWLCWLGCYTLLLWALRRRMWA). Asn-89 carries N-linked (GlcNAc...) asparagine glycosylation. Glu-177, Asn-213, and Tyr-298 together coordinate S-adenosyl-L-homocysteine.

The protein belongs to the METTL9 family.

It is found in the endoplasmic reticulum. Its subcellular location is the mitochondrion. It carries out the reaction L-histidyl-[protein] + S-adenosyl-L-methionine = N(pros)-methyl-L-histidyl-[protein] + S-adenosyl-L-homocysteine + H(+). Its function is as follows. Protein-histidine N-methyltransferase that specifically catalyzes 1-methylhistidine (pros-methylhistidine) methylation of target proteins. Mediates methylation of proteins with a His-x-His (HxH) motif (where 'x' is preferably a small amino acid); 1-methylhistidine modification may affect the binding of zinc and other metals to its target proteins. This is Protein-L-histidine N-pros-methyltransferase from Gallus gallus (Chicken).